The primary structure comprises 176 residues: Isopentenyl-diphosphate Delta-isomerase (176 aa).

Positions 24 and 30 each coordinate Mn(2+). Residues 28-160 (LLHRAFSIFV…PSAFTVWFHC (133 aa)) enclose the Nudix hydrolase domain. Residue Cys-65 is part of the active site. Mn(2+) is bound at residue His-67. Glu-85 contributes to the Mg(2+) binding site. The Mn(2+) site is built by Glu-110 and Glu-112. Glu-112 is an active-site residue.

The protein belongs to the IPP isomerase type 1 family. It depends on Mg(2+) as a cofactor. Mn(2+) serves as cofactor.

The protein resides in the cytoplasm. It catalyses the reaction isopentenyl diphosphate = dimethylallyl diphosphate. The protein operates within isoprenoid biosynthesis; dimethylallyl diphosphate biosynthesis; dimethylallyl diphosphate from isopentenyl diphosphate: step 1/1. Functionally, catalyzes the 1,3-allylic rearrangement of the homoallylic substrate isopentenyl (IPP) to its highly electrophilic allylic isomer, dimethylallyl diphosphate (DMAPP). The protein is Isopentenyl-diphosphate Delta-isomerase of Burkholderia multivorans (strain ATCC 17616 / 249).